The primary structure comprises 229 residues: UPF0758 protein CLL_A0562 (229 aa).

The MPN domain maps to lysine 107–isoleucine 229. The Zn(2+) site is built by histidine 178, histidine 180, and aspartate 191. Residues histidine 178–aspartate 191 carry the JAMM motif motif.

This sequence belongs to the UPF0758 family.

The polypeptide is UPF0758 protein CLL_A0562 (Clostridium botulinum (strain Eklund 17B / Type B)).